Reading from the N-terminus, the 93-residue chain is Small ribosomal subunit protein uS19 (93 aa).

It belongs to the universal ribosomal protein uS19 family.

Its function is as follows. Protein S19 forms a complex with S13 that binds strongly to the 16S ribosomal RNA. The polypeptide is Small ribosomal subunit protein uS19 (Mycobacterium sp. (strain JLS)).